Reading from the N-terminus, the 256-residue chain is Small ribosomal subunit protein eS1 (256 aa).

Basic residues predominate over residues 1–18; the sequence is MAVGKNKRLSKGKKGIKK. Positions 1–20 are disordered; that stretch reads MAVGKNKRLSKGKKGIKKRT. A2 carries the N-acetylalanine; partial modification.

This sequence belongs to the eukaryotic ribosomal protein eS1 family. Component of the small ribosomal subunit. Mature ribosomes consist of a small (40S) and a large (60S) subunit. The 40S subunit contains about 33 different proteins and 1 molecule of RNA (18S). The 60S subunit contains about 49 different proteins and 3 molecules of RNA (25S, 5.8S and 5S).

It localises to the cytoplasm. The polypeptide is Small ribosomal subunit protein eS1 (rps1) (Emericella nidulans (strain FGSC A4 / ATCC 38163 / CBS 112.46 / NRRL 194 / M139) (Aspergillus nidulans)).